The primary structure comprises 297 residues: ATP synthase subunit a (297 aa).

The next 8 helical transmembrane spans lie at 38–58 (PLIP…IAIL), 77–97 (GYVL…VDLL), 107–127 (LFII…VGGI), 133–153 (SSTV…IMGV), 174–194 (TIPL…LLSI), 202–222 (VLAG…FFTL), 230–250 (VGLV…HVYF), and 252–272 (ILVS…YWSQ).

This sequence belongs to the ATPase A chain family. In terms of assembly, F-type ATPases have 2 components, CF(1) - the catalytic core - and CF(0) - the membrane proton channel. CF(1) has five subunits: alpha(3), beta(3), gamma(1), delta(1), epsilon(1). CF(0) has three main subunits: a(1), b(2) and c(9-12). The alpha and beta chains form an alternating ring which encloses part of the gamma chain. CF(1) is attached to CF(0) by a central stalk formed by the gamma and epsilon chains, while a peripheral stalk is formed by the delta and b chains.

It localises to the cell membrane. In terms of biological role, key component of the proton channel; it plays a direct role in the translocation of protons across the membrane. The chain is ATP synthase subunit a from Mycoplasmoides gallisepticum (strain R(low / passage 15 / clone 2)) (Mycoplasma gallisepticum).